The chain runs to 489 residues: MTSSSVRVRFCPSPTGIPHVGMVRTALFNWAYARHTGGTFVFRIEDTDAARDSEESYLALLDALRWLGLDWDEGPEVDGPYGPYRQSQRTEIYHDVVAKLLTAGEAYYAFSTPEEVEARHIAAGRNPKLGYDNFDRQLTDSQRAAYLAEGRKPVVRLRMPDTDLAWHDLVRGPTTFAAGSVPDFALTRATGDPLYTLVNPCDDALMKITHVLRGEDLLPSTPRQIALYQALMCIGIAERVPEFAHLPTVLGEETKKLSKRDPQSNLFAHRDRGFIPEGLLNYLALLGWAIADDHDLFSLDEMVAAFDVADVNSNPARFDQKKADAINAEHIRMLDVADFTARLRAYLDTHGHQLALDDAAFAVAAELVQTRIVVLEDAWALLKFLNDDRYAIDPKAAAKELGPDAGPVLDAAIAALDGAADWTTADIEAALKTALIGGMALKPRKAFGPIRVAATGTTVSPPLFESLELLGRERSLGRLRSARDQVGSP.

The 'HIGH' region motif lies at 12–22 (PSPTGIPHVGM). A 'KMSKS' region motif is present at residues 256–260 (KLSKR). K259 is an ATP binding site.

The protein belongs to the class-I aminoacyl-tRNA synthetase family. Glutamate--tRNA ligase type 1 subfamily. Monomer.

The protein localises to the cytoplasm. It catalyses the reaction tRNA(Glu) + L-glutamate + ATP = L-glutamyl-tRNA(Glu) + AMP + diphosphate. Its function is as follows. Catalyzes the attachment of glutamate to tRNA(Glu) in a two-step reaction: glutamate is first activated by ATP to form Glu-AMP and then transferred to the acceptor end of tRNA(Glu). The chain is Glutamate--tRNA ligase from Mycobacterium ulcerans (strain Agy99).